The primary structure comprises 311 residues: Putative methylthioribose-1-phosphate isomerase (311 aa).

Substrate contacts are provided by residues 46 to 48 (RGA), arginine 80, and glutamine 174. The active-site Proton donor is the aspartate 215. 224-225 (NK) provides a ligand contact to substrate.

The protein belongs to the eIF-2B alpha/beta/delta subunits family. MtnA subfamily.

The enzyme catalyses 5-(methylsulfanyl)-alpha-D-ribose 1-phosphate = 5-(methylsulfanyl)-D-ribulose 1-phosphate. Catalyzes the interconversion of methylthioribose-1-phosphate (MTR-1-P) into methylthioribulose-1-phosphate (MTRu-1-P). This is Putative methylthioribose-1-phosphate isomerase from Methanothermobacter thermautotrophicus (strain ATCC 29096 / DSM 1053 / JCM 10044 / NBRC 100330 / Delta H) (Methanobacterium thermoautotrophicum).